Consider the following 122-residue polypeptide: Succinate dehydrogenase assembly factor 2, mitochondrial (122 aa).

Belongs to the SDHAF2 family. Interacts with the flavoprotein subunit within the SDH catalytic dimer.

The protein resides in the mitochondrion matrix. Plays an essential role in the assembly of succinate dehydrogenase (SDH), an enzyme complex (also referred to as respiratory complex II) that is a component of both the tricarboxylic acid (TCA) cycle and the mitochondrial electron transport chain, and which couples the oxidation of succinate to fumarate with the reduction of ubiquinone (coenzyme Q) to ubiquinol. Required for flavinylation (covalent attachment of FAD) of the flavoprotein subunit of the SDH catalytic dimer. The sequence is that of Succinate dehydrogenase assembly factor 2, mitochondrial from Caenorhabditis briggsae.